A 599-amino-acid chain; its full sequence is Sulfite reductase [NADPH] flavoprotein alpha-component (599 aa).

The 139-residue stretch at 64–202 folds into the Flavodoxin-like domain; it reads ITIISASQTG…AASEWRARVV (139 aa). FMN contacts are provided by residues 70-75, 117-120, and 153-162; these read SQTGNA, STQG, and LGDSSYEFFC. Residues 234 to 448 form the FAD-binding FR-type domain; that stretch reads DSPLVASLSV…IEHNDNFRLP (215 aa). Residues Thr-322, Ala-356, 386 to 389, 404 to 406, Tyr-410, and 419 to 422 contribute to the FAD site; these read RLYS, TVG, and GGAS. Residues 519 to 520, 525 to 529, and Asp-561 contribute to the NADP(+) site; these read SR and KVYVQ. Tyr-599 contributes to the FAD binding site.

The protein belongs to the NADPH-dependent sulphite reductase flavoprotein subunit CysJ family. It in the N-terminal section; belongs to the flavodoxin family. In the C-terminal section; belongs to the flavoprotein pyridine nucleotide cytochrome reductase family. In terms of assembly, alpha(8)-beta(8). The alpha component is a flavoprotein, the beta component is a hemoprotein. FAD serves as cofactor. The cofactor is FMN.

It catalyses the reaction hydrogen sulfide + 3 NADP(+) + 3 H2O = sulfite + 3 NADPH + 4 H(+). Its pathway is sulfur metabolism; hydrogen sulfide biosynthesis; hydrogen sulfide from sulfite (NADPH route): step 1/1. Functionally, component of the sulfite reductase complex that catalyzes the 6-electron reduction of sulfite to sulfide. This is one of several activities required for the biosynthesis of L-cysteine from sulfate. The flavoprotein component catalyzes the electron flow from NADPH -&gt; FAD -&gt; FMN to the hemoprotein component. This is Sulfite reductase [NADPH] flavoprotein alpha-component from Escherichia coli O9:H4 (strain HS).